Consider the following 212-residue polypeptide: Thiamine-phosphate synthase (212 aa).

Residues 40 to 44 and Asn-75 contribute to the 4-amino-2-methyl-5-(diphosphooxymethyl)pyrimidine site; that span reads QFREK. Mg(2+)-binding residues include Asp-76 and Asp-95. 4-amino-2-methyl-5-(diphosphooxymethyl)pyrimidine is bound at residue Ser-113. 139-141 contributes to the 2-[(2R,5Z)-2-carboxy-4-methylthiazol-5(2H)-ylidene]ethyl phosphate binding site; that stretch reads TPS. Lys-142 is a 4-amino-2-methyl-5-(diphosphooxymethyl)pyrimidine binding site. Residues Gly-171 and 191–192 contribute to the 2-[(2R,5Z)-2-carboxy-4-methylthiazol-5(2H)-ylidene]ethyl phosphate site; that span reads IS.

It belongs to the thiamine-phosphate synthase family. Requires Mg(2+) as cofactor.

The enzyme catalyses 2-[(2R,5Z)-2-carboxy-4-methylthiazol-5(2H)-ylidene]ethyl phosphate + 4-amino-2-methyl-5-(diphosphooxymethyl)pyrimidine + 2 H(+) = thiamine phosphate + CO2 + diphosphate. It catalyses the reaction 2-(2-carboxy-4-methylthiazol-5-yl)ethyl phosphate + 4-amino-2-methyl-5-(diphosphooxymethyl)pyrimidine + 2 H(+) = thiamine phosphate + CO2 + diphosphate. It carries out the reaction 4-methyl-5-(2-phosphooxyethyl)-thiazole + 4-amino-2-methyl-5-(diphosphooxymethyl)pyrimidine + H(+) = thiamine phosphate + diphosphate. It participates in cofactor biosynthesis; thiamine diphosphate biosynthesis; thiamine phosphate from 4-amino-2-methyl-5-diphosphomethylpyrimidine and 4-methyl-5-(2-phosphoethyl)-thiazole: step 1/1. Condenses 4-methyl-5-(beta-hydroxyethyl)thiazole monophosphate (THZ-P) and 2-methyl-4-amino-5-hydroxymethyl pyrimidine pyrophosphate (HMP-PP) to form thiamine monophosphate (TMP). In Staphylococcus carnosus (strain TM300), this protein is Thiamine-phosphate synthase.